Consider the following 60-residue polypeptide: UPF0434 protein YPA_0693 (60 aa).

It belongs to the UPF0434 family.

The polypeptide is UPF0434 protein YPA_0693 (Yersinia pestis bv. Antiqua (strain Antiqua)).